The sequence spans 184 residues: Jacalin-related lectin 2 (184 aa).

The Jacalin-type lectin domain occupies 4–163 (KIKIGPVGTD…LQNIGVYLQP (160 aa)).

The protein belongs to the jacalin lectin family.

The polypeptide is Jacalin-related lectin 2 (JAL2) (Arabidopsis thaliana (Mouse-ear cress)).